The primary structure comprises 75 residues: High-potential iron-sulfur protein (75 aa).

[4Fe-4S] cluster is bound by residues Cys38, Cys41, Cys54, and Cys68.

In terms of assembly, homodimer. Monomer at different ionic strengths.

In terms of biological role, specific class of high-redox-potential 4Fe-4S ferredoxins. Functions in anaerobic electron transport in most purple and in some other photosynthetic bacteria and in at least one genus (Paracoccus) of halophilic, denitrifying bacteria. Competent in photosynthetic electron transfer to oxidized cytochrome bc1 complex via the membrane-bound c-type tetraheme. The sequence is that of High-potential iron-sulfur protein (hip) from Rhodoferax fermentans.